Here is a 78-residue protein sequence, read N- to C-terminus: MAMLCMCDECQAIINYYVVQIEQLCNEIVKTRKRVEPYKKLGKLFFEIIQNDLFEAIAEEVFRIDEKPKRKTNKRVCK.

This is an uncharacterized protein from Ureaplasma parvum serovar 3 (strain ATCC 700970).